Reading from the N-terminus, the 442-residue chain is ATP-dependent protease ATPase subunit HslU (442 aa).

ATP contacts are provided by residues I18 and 60–65 (GVGKTE). The segment at 137–156 (PKPKNDWESTETDSSSNTRQ) is disordered. Residues D255, E320, and R392 each contribute to the ATP site.

This sequence belongs to the ClpX chaperone family. HslU subfamily. In terms of assembly, a double ring-shaped homohexamer of HslV is capped on each side by a ring-shaped HslU homohexamer. The assembly of the HslU/HslV complex is dependent on binding of ATP.

The protein resides in the cytoplasm. In terms of biological role, ATPase subunit of a proteasome-like degradation complex; this subunit has chaperone activity. The binding of ATP and its subsequent hydrolysis by HslU are essential for unfolding of protein substrates subsequently hydrolyzed by HslV. HslU recognizes the N-terminal part of its protein substrates and unfolds these before they are guided to HslV for hydrolysis. In Shewanella baltica (strain OS155 / ATCC BAA-1091), this protein is ATP-dependent protease ATPase subunit HslU.